The following is a 469-amino-acid chain: 3-isopropylmalate dehydratase large subunit (469 aa).

[4Fe-4S] cluster is bound by residues Cys-347, Cys-410, and Cys-413.

Belongs to the aconitase/IPM isomerase family. LeuC type 1 subfamily. As to quaternary structure, heterodimer of LeuC and LeuD. [4Fe-4S] cluster is required as a cofactor.

It catalyses the reaction (2R,3S)-3-isopropylmalate = (2S)-2-isopropylmalate. It functions in the pathway amino-acid biosynthesis; L-leucine biosynthesis; L-leucine from 3-methyl-2-oxobutanoate: step 2/4. In terms of biological role, catalyzes the isomerization between 2-isopropylmalate and 3-isopropylmalate, via the formation of 2-isopropylmaleate. The chain is 3-isopropylmalate dehydratase large subunit from Burkholderia orbicola (strain MC0-3).